The chain runs to 292 residues: MTEFDLSTREGRWKHFGSVDPIEGTKPTIKEEMKDLQSTHKNFLFEIEEVGIKNLVYPVLVDRFQTAGNFSFSTSLNLDEKGINMSRILESVEKHYHNGIELDFDALYQLLRSLQERMNQNAAGLDVSAKWFFDRFSPITQIKAVGHADVTYGLAIDKQNVTRKEITIEAAVTTLCPCSKEISEYSAHNQRGIVTVKAYINKDIELIDNYKDVILDAMEANASSILYPILKRPDEKSVTERAYENPRFVEDLIRLIAADLVDFDWLDGFDIECRNEESIHQHDAFAKLKYRK.

This sequence belongs to the GTP cyclohydrolase IV family.

The enzyme catalyses GTP + H2O = 7,8-dihydroneopterin 3'-triphosphate + formate + H(+). It participates in cofactor biosynthesis; 7,8-dihydroneopterin triphosphate biosynthesis; 7,8-dihydroneopterin triphosphate from GTP: step 1/1. In terms of biological role, converts GTP to 7,8-dihydroneopterin triphosphate. In Staphylococcus saprophyticus subsp. saprophyticus (strain ATCC 15305 / DSM 20229 / NCIMB 8711 / NCTC 7292 / S-41), this protein is GTP cyclohydrolase FolE2.